The primary structure comprises 192 residues: Phosphoheptose isomerase (192 aa).

The SIS domain occupies 37-192 (LADSFKQEGK…IQLVEKEMAK (156 aa)). Position 52 to 54 (52 to 54 (NGG)) interacts with substrate. Zn(2+) is bound by residues H61 and E65. Substrate is bound by residues E65, 93 to 94 (ND), 119 to 121 (STS), S124, and Q172. Zn(2+) contacts are provided by Q172 and H180.

It belongs to the SIS family. GmhA subfamily. Homotetramer. The cofactor is Zn(2+).

The protein resides in the cytoplasm. The enzyme catalyses 2 D-sedoheptulose 7-phosphate = D-glycero-alpha-D-manno-heptose 7-phosphate + D-glycero-beta-D-manno-heptose 7-phosphate. It participates in carbohydrate biosynthesis; D-glycero-D-manno-heptose 7-phosphate biosynthesis; D-glycero-alpha-D-manno-heptose 7-phosphate and D-glycero-beta-D-manno-heptose 7-phosphate from sedoheptulose 7-phosphate: step 1/1. In terms of biological role, catalyzes the isomerization of sedoheptulose 7-phosphate in D-glycero-D-manno-heptose 7-phosphate. The protein is Phosphoheptose isomerase of Aeromonas salmonicida (strain A449).